The chain runs to 59 residues: Small, acid-soluble spore protein H 2 (59 aa).

This sequence belongs to the SspH family.

It localises to the spore core. In Bacillus cytotoxicus (strain DSM 22905 / CIP 110041 / 391-98 / NVH 391-98), this protein is Small, acid-soluble spore protein H 2.